Reading from the N-terminus, the 436-residue chain is Prenyltransferase nscD (436 aa).

It belongs to the tryptophan dimethylallyltransferase family.

It functions in the pathway secondary metabolite biosynthesis. Prenyltransferase; part of the gene cluster that mediates the biosynthesis of neosartoricin B, a prenylated anthracenone that probably exhibits T-cell antiproliferative activity, suggestive of a physiological role as an immunosuppressive agent. The non-reducing polyketide synthase nscA probably synthesizes and cyclizes the decaketide backbone. The hydrolase nscB then mediates the product release through hydrolysis followed by spontaneous decarboxylation. The prenyltransferase nscD catalyzes the addition of the dimethylallyl group to the aromatic C5. The FAD-dependent monooxygenase nscC is then responsible for the stereospecific hydroxylation at C2. Neosartoricin B can be converted into two additional compounds neosartoricins C and D. Neosartoricin C is a spirocyclic compound that is cyclized through the attack of C3 hydroxyl on C14, followed by dehydration. On the other hand, neosartoricin D is a further cyclized compound in which attack of C2 on C14 in neosartoricin C results in the formation of the acetal-containing dioxabicyclo-octanone ring. Both of these compounds are novel and possibly represent related metabolites of the gene cluster. The polypeptide is Prenyltransferase nscD (Arthroderma benhamiae (strain ATCC MYA-4681 / CBS 112371) (Trichophyton mentagrophytes)).